Reading from the N-terminus, the 520-residue chain is GMP synthase [glutamine-hydrolyzing] (520 aa).

Residues 3 to 200 (AIAIIDFGSQ…FLDIANCKRD (198 aa)) form the Glutamine amidotransferase type-1 domain. Cys84 functions as the Nucleophile in the catalytic mechanism. Residues His175 and Glu177 contribute to the active site. The 186-residue stretch at 201 to 386 (WTMKSFIEEQ…IGLSDEIIFQ (186 aa)) folds into the GMPS ATP-PPase domain. Position 228–234 (228–234 (SGGVDSS)) interacts with ATP.

Homodimer.

The enzyme catalyses XMP + L-glutamine + ATP + H2O = GMP + L-glutamate + AMP + diphosphate + 2 H(+). Its pathway is purine metabolism; GMP biosynthesis; GMP from XMP (L-Gln route): step 1/1. In terms of biological role, catalyzes the synthesis of GMP from XMP. The sequence is that of GMP synthase [glutamine-hydrolyzing] from Wolbachia pipientis wMel.